Consider the following 208-residue polypeptide: Redox-sensing transcriptional repressor Rex (208 aa).

The segment at residues 15–54 is a DNA-binding region (H-T-H motif); it reads SYYMCLERLLDEGVEVVSSEELARRLDLKASQIRKDLSYF. Residue 89–94 coordinates NAD(+); sequence GAGNIG.

It belongs to the transcriptional regulatory Rex family. Homodimer.

The protein resides in the cytoplasm. Modulates transcription in response to changes in cellular NADH/NAD(+) redox state. In Thermotoga petrophila (strain ATCC BAA-488 / DSM 13995 / JCM 10881 / RKU-1), this protein is Redox-sensing transcriptional repressor Rex.